The primary structure comprises 141 residues: Large ribosomal subunit protein uL11 (141 aa).

Belongs to the universal ribosomal protein uL11 family. As to quaternary structure, part of the ribosomal stalk of the 50S ribosomal subunit. Interacts with L10 and the large rRNA to form the base of the stalk. L10 forms an elongated spine to which L12 dimers bind in a sequential fashion forming a multimeric L10(L12)X complex. One or more lysine residues are methylated.

Its function is as follows. Forms part of the ribosomal stalk which helps the ribosome interact with GTP-bound translation factors. The sequence is that of Large ribosomal subunit protein uL11 from Petrotoga mobilis (strain DSM 10674 / SJ95).